The chain runs to 506 residues: Aldehyde dehydrogenase [NAD(P)+] 1 (506 aa).

E268 acts as the Proton acceptor in catalysis. C302 functions as the Nucleophile in the catalytic mechanism.

It belongs to the aldehyde dehydrogenase family.

The protein resides in the cytoplasm. It carries out the reaction an aldehyde + NAD(+) + H2O = a carboxylate + NADH + 2 H(+). It catalyses the reaction 3-aminopropanal + NAD(+) + H2O = beta-alanine + NADH + 2 H(+). Cytoplasmic aldehyde dehydrogenase involved in ethanol oxidation. Required for pantothenic acid production through the conversion of 3-aminopropanal to beta-alanine, an intermediate in pantothenic acid (vitamin B5) and coenzyme A (CoA) biosynthesis. The protein is Aldehyde dehydrogenase [NAD(P)+] 1 (ALD2) of Saccharomyces cerevisiae (strain ATCC 204508 / S288c) (Baker's yeast).